The primary structure comprises 148 residues: Deoxyuridine 5'-triphosphate nucleotidohydrolase (148 aa).

Serine 69, glycine 82, aspartate 85, tyrosine 88, arginine 137, phenylalanine 142, and glycine 143 together coordinate dUMP.

Belongs to the dUTPase family. In terms of assembly, homotrimer. It depends on Mg(2+) as a cofactor.

It carries out the reaction dUTP + H2O = dUMP + diphosphate + H(+). It functions in the pathway pyrimidine metabolism; dUMP biosynthesis; dUMP from dCTP (dUTP route): step 2/2. Involved in nucleotide metabolism via production of dUMP, the immediate precursor of thymidine nucleotides, and decreases the intracellular concentration of dUTP so that uracil cannot be incorporated into DNA. The protein is Deoxyuridine 5'-triphosphate nucleotidohydrolase (DUT1) of Kluyveromyces lactis (strain ATCC 8585 / CBS 2359 / DSM 70799 / NBRC 1267 / NRRL Y-1140 / WM37) (Yeast).